The sequence spans 958 residues: Dermatan-sulfate epimerase (958 aa).

The N-terminal stretch at methionine 1 to alanine 22 is a signal peptide. The Lumenal portion of the chain corresponds to tyrosine 23–arginine 902. Asparagine 183 carries N-linked (GlcNAc...) (complex) asparagine glycosylation. Catalysis depends on histidine 205, which acts as the Proton donor. Tyrosine 261 is an active-site residue. N-linked (GlcNAc...) (high mannose) asparagine glycosylation is present at asparagine 336. N-linked (GlcNAc...) (complex) asparagine glycosylation is present at asparagine 411. 2 residues coordinate Mn(2+): histidine 452 and glutamate 470. Residue tyrosine 473 is part of the active site. Asparagine 481 is a Mn(2+) binding site. Asparagine 642 is a glycosylation site (N-linked (GlcNAc...) (complex) asparagine). N-linked (GlcNAc...) (paucimannose) asparagine glycosylation occurs at asparagine 648. Residues leucine 903–phenylalanine 923 form a helical membrane-spanning segment. Residues glutamine 924–arginine 933 are Cytoplasmic-facing. The helical transmembrane segment at cysteine 934–serine 954 threads the bilayer. The Lumenal portion of the chain corresponds to glutamine 955 to cysteine 958.

It belongs to the dermatan-sulfate isomerase family. The cofactor is Mn(2+). In terms of processing, N-glycosylated. Glycosylation is important for enzymatic activity. Ubiquitously expressed with higher expression in kidney and ovary and lower expression in brain, colon and thymus. Also expressed in renal cell carcinomas, brain tumors, and in a part of melanomas and adenocarcinomas from organs other than the breast. Expressed in squamous cell carcinomas (SCC), glioma, and some adenocarcinoma cell lines, but not in breast cancer cell lines or any normal tissues (at protein level).

It localises to the endoplasmic reticulum membrane. Its subcellular location is the golgi apparatus membrane. The protein localises to the cytoplasmic vesicle membrane. The protein resides in the microsome membrane. It carries out the reaction chondroitin 4'-sulfate = dermatan 4'-sulfate. Its pathway is glycan metabolism; chondroitin sulfate biosynthesis. It participates in glycan metabolism; heparan sulfate biosynthesis. Functionally, converts D-glucuronic acid to L-iduronic acid (IdoUA) residues. Plays an important role in the biosynthesis of the glycosaminoglycan/mucopolysaccharide dermatan sulfate. The protein is Dermatan-sulfate epimerase (DSE) of Homo sapiens (Human).